Consider the following 68-residue polypeptide: Small ribosomal subunit protein bS21 (68 aa).

The tract at residues Pro-39 to Glu-68 is disordered. Positions Arg-54–Glu-68 are enriched in basic residues.

This sequence belongs to the bacterial ribosomal protein bS21 family.

The sequence is that of Small ribosomal subunit protein bS21 from Orientia tsutsugamushi (strain Boryong) (Rickettsia tsutsugamushi).